Reading from the N-terminus, the 75-residue chain is Small ribosomal subunit protein bS18 (75 aa).

It belongs to the bacterial ribosomal protein bS18 family. In terms of assembly, part of the 30S ribosomal subunit. Forms a tight heterodimer with protein bS6.

Its function is as follows. Binds as a heterodimer with protein bS6 to the central domain of the 16S rRNA, where it helps stabilize the platform of the 30S subunit. The chain is Small ribosomal subunit protein bS18 from Colwellia psychrerythraea (strain 34H / ATCC BAA-681) (Vibrio psychroerythus).